The following is a 75-amino-acid chain: uncharacterized protein (75 aa).

2 consecutive 4Fe-4S ferredoxin-type domains span residues 2-30 and 37-68; these read SHTIVTEKCIGVAECVNACPVSCIHKGEG and DWYWIDFAACIDCSICIQVCPTKGAILDKEEP. Residues Cys10 and Cys16 each contribute to the [3Fe-4S] cluster site. 4 residues coordinate [4Fe-4S] cluster: Cys20, Cys46, Cys49, and Cys52. Cys56 contributes to the [3Fe-4S] cluster binding site.

Requires [4Fe-4S] cluster as cofactor. The cofactor is [3Fe-4S] cluster.

The protein resides in the plastid. Its subcellular location is the chloroplast. This is an uncharacterized protein from Porphyra purpurea (Red seaweed).